A 509-amino-acid polypeptide reads, in one-letter code: Subtelomeric hrmA-associated cluster protein AFUB_078990 (509 aa).

In terms of biological role, part of the subtelomeric hrmA-associated cluster (HAC) containing genes that alter the hyphal surface (such as reduced total chitin or increased beta-glucan exposure) and perturb inter-hyphal interactions within the developing biofilms, resulting in a loss of vertically aligned polarized growing filaments. Consequently, this hypoxia-typic morphotype (called H-MORPH) with altered biofilm architecture leads to increased hypoxia fitness, increased host inflammation, rapid disease progression, and mortality in a murine model of invasive aspergillosis. The polypeptide is Subtelomeric hrmA-associated cluster protein AFUB_078990 (Aspergillus fumigatus (strain CBS 144.89 / FGSC A1163 / CEA10) (Neosartorya fumigata)).